The chain runs to 73 residues: Ocellatin-PT6 (73 aa).

A signal peptide spans 1 to 22; it reads MAFLKKSLFLVLFLGLVSLSIC. Positions 23-39 are excised as a propeptide; sequence DEEKRQDEDDDDDDDEE.

Expressed by the skin glands.

It is found in the secreted. Has antibacterial activity against Gram-negative bacterium E.coli ATCC 25922 (MIC=120 uM) but not against S.pneumoniae ATCC 700603, S.choleraesuis ATCC 14028 or against Gram-positive bacterium S.aureus ATCC 29313. Shows no hemolytic activity and no cytotoxicity. The protein is Ocellatin-PT6 of Leptodactylus pustulatus (Ceara white-lipped frog).